We begin with the raw amino-acid sequence, 136 residues long: MGMLSEFKAFAVKGNVVDMAVGIIIGAAFGKIVSSFVGDVIMPPLGLLIGGVDFSDLAITLKQAQGDMPAVVLAYGRFIQTVIDFLIIAFAIFIGVKALNQLKRKEAEAPSLPPAPTRDQQLLEEIRDLLKTRGKS.

The next 2 membrane-spanning stretches (helical) occupy residues 9–29 (AFAV…GAAF) and 78–98 (FIQT…GVKA).

This sequence belongs to the MscL family. As to quaternary structure, homopentamer.

It localises to the cell inner membrane. Functionally, channel that opens in response to stretch forces in the membrane lipid bilayer. May participate in the regulation of osmotic pressure changes within the cell. The chain is Large-conductance mechanosensitive channel from Azotobacter vinelandii (strain DJ / ATCC BAA-1303).